Consider the following 433-residue polypeptide: 23S rRNA (uracil(1939)-C(5))-methyltransferase RlmD (433 aa).

The TRAM domain maps to 10–68 (RTTTRQIITVSVNDLDSFGQGVARHNGKTLFIPGLLPQENAEVTVTEDKKQYARAKVVR). Interaction with RNA regions lie at residues 23 to 40 (DLDSFGQGVARHNGKTLF) and 58 to 63 (KKQYAR). [4Fe-4S] cluster-binding residues include C81, C87, C90, and C162. 6 residues coordinate S-adenosyl-L-methionine: Q265, F294, N299, E315, N342, and D363. The Nucleophile role is filled by C389.

This sequence belongs to the class I-like SAM-binding methyltransferase superfamily. RNA M5U methyltransferase family. RlmD subfamily.

It catalyses the reaction uridine(1939) in 23S rRNA + S-adenosyl-L-methionine = 5-methyluridine(1939) in 23S rRNA + S-adenosyl-L-homocysteine + H(+). Catalyzes the formation of 5-methyl-uridine at position 1939 (m5U1939) in 23S rRNA. The sequence is that of 23S rRNA (uracil(1939)-C(5))-methyltransferase RlmD from Escherichia coli (strain K12).